Consider the following 342-residue polypeptide: Heat-inducible transcription repressor HrcA (342 aa).

It belongs to the HrcA family.

Functionally, negative regulator of class I heat shock genes (grpE-dnaK-dnaJ and groELS operons). Prevents heat-shock induction of these operons. The polypeptide is Heat-inducible transcription repressor HrcA (Leptospira borgpetersenii serovar Hardjo-bovis (strain JB197)).